A 49-amino-acid chain; its full sequence is Large ribosomal subunit protein bL33 (49 aa).

Belongs to the bacterial ribosomal protein bL33 family.

The polypeptide is Large ribosomal subunit protein bL33 (Streptococcus gordonii (strain Challis / ATCC 35105 / BCRC 15272 / CH1 / DL1 / V288)).